The sequence spans 327 residues: Melanoma-associated antigen B18 (327 aa).

The span at 1–19 (MPRGQKSKLRAREKRRQAR) shows a compositional bias: basic residues. Positions 1 to 85 (MPRGQKSKLR…SSDDSEDTED (85 aa)) are disordered. Over residues 46 to 70 (MPTSPNMPMGEQSTFSHSYTSTSDQ) the composition is skewed to polar residues. In terms of domain architecture, MAGE spans 91-289 (INHKVVLLVQ…DSFPTLYEAA (199 aa)).

In terms of assembly, interacts with LNX1. As to expression, expressed in testis, stomach, large intestine, small intestine, spleen, lymph node, bone marrow lymphocytes and blood T-lymphocytes. Not detected in brain, heart, lung, liver or kidney (at protein level).

It is found in the cytoplasm. Functionally, may enhance ubiquitin ligase activity of RING-type zinc finger-containing E3 ubiquitin-protein ligases. Proposed to act through recruitment and/or stabilization of the Ubl-conjugating enzyme (E2) at the E3:substrate complex. The sequence is that of Melanoma-associated antigen B18 from Mus musculus (Mouse).